Consider the following 146-residue polypeptide: Large-conductance mechanosensitive channel (146 aa).

Helical transmembrane passes span 12 to 32 (AFAM…GGAF) and 88 to 108 (LQAT…IKLI).

The protein belongs to the MscL family. In terms of assembly, homopentamer.

The protein resides in the cell inner membrane. Channel that opens in response to stretch forces in the membrane lipid bilayer. May participate in the regulation of osmotic pressure changes within the cell. The sequence is that of Large-conductance mechanosensitive channel from Bacteroides fragilis (strain ATCC 25285 / DSM 2151 / CCUG 4856 / JCM 11019 / LMG 10263 / NCTC 9343 / Onslow / VPI 2553 / EN-2).